The primary structure comprises 1235 residues: ATP-dependent helicase/nuclease subunit A (1235 aa).

Residues 4 to 470 (REYTLSQKQA…IILAENFRSM (467 aa)) form the UvrD-like helicase ATP-binding domain. 25 to 32 (ASAGSGKT) contributes to the ATP binding site. The UvrD-like helicase C-terminal domain maps to 501-795 (QFGAKYYPDE…KLMTIHGSKG (295 aa)).

The protein belongs to the helicase family. AddA subfamily. In terms of assembly, heterodimer of AddA and AddB/RexB. Mg(2+) serves as cofactor.

It carries out the reaction Couples ATP hydrolysis with the unwinding of duplex DNA by translocating in the 3'-5' direction.. The catalysed reaction is ATP + H2O = ADP + phosphate + H(+). In terms of biological role, the heterodimer acts as both an ATP-dependent DNA helicase and an ATP-dependent, dual-direction single-stranded exonuclease. Recognizes the chi site generating a DNA molecule suitable for the initiation of homologous recombination. The AddA nuclease domain is required for chi fragment generation; this subunit has the helicase and 3' -&gt; 5' nuclease activities. The polypeptide is ATP-dependent helicase/nuclease subunit A (Pediococcus pentosaceus (strain ATCC 25745 / CCUG 21536 / LMG 10740 / 183-1w)).